An 860-amino-acid chain; its full sequence is DNA mismatch repair protein MutS (860 aa).

Position 607–614 (607–614 (GPNMSGKS)) interacts with ATP.

This sequence belongs to the DNA mismatch repair MutS family.

Its function is as follows. This protein is involved in the repair of mismatches in DNA. It is possible that it carries out the mismatch recognition step. This protein has a weak ATPase activity. The polypeptide is DNA mismatch repair protein MutS (Listeria monocytogenes serovar 1/2a (strain ATCC BAA-679 / EGD-e)).